The primary structure comprises 1405 residues: DNA-directed RNA polymerase III subunit rpc1 (1405 aa).

Positions 66, 69, 76, 79, 106, 109, and 153 each coordinate Zn(2+). Asp-493, Asp-495, and Asp-497 together coordinate Mg(2+). Residues 838–850 are bridging helix; the sequence is PTEFLFHAISGRE.

It belongs to the RNA polymerase beta' chain family. Component of the RNA polymerase III (Pol III) complex consisting of 17 subunits.

Its subcellular location is the nucleus. It carries out the reaction RNA(n) + a ribonucleoside 5'-triphosphate = RNA(n+1) + diphosphate. In terms of biological role, DNA-dependent RNA polymerase catalyzes the transcription of DNA into RNA using the four ribonucleoside triphosphates as substrates. Largest and catalytic core component of RNA polymerase III which synthesizes small RNAs, such as 5S rRNA and tRNAs. Forms the polymerase active center together with the second largest subunit. A single-stranded DNA template strand of the promoter is positioned within the central active site cleft of Pol III. A bridging helix emanates from RPC1 and crosses the cleft near the catalytic site and is thought to promote translocation of Pol III by acting as a ratchet that moves the RNA-DNA hybrid through the active site by switching from straight to bent conformations at each step of nucleotide addition. The chain is DNA-directed RNA polymerase III subunit rpc1 (rpc1) from Schizosaccharomyces pombe (strain 972 / ATCC 24843) (Fission yeast).